The primary structure comprises 180 residues: Hypoxanthine-guanine phosphoribosyltransferase (180 aa).

Diphosphate-binding residues include Lys-43 and Gly-44. Mg(2+) contacts are provided by Glu-99 and Asp-100. Asp-103 (proton acceptor) is an active-site residue. Residues Lys-131, 152–153, and Asp-159 contribute to the GMP site; that span reads FV. Arg-165 provides a ligand contact to diphosphate.

This sequence belongs to the purine/pyrimidine phosphoribosyltransferase family. It depends on Mg(2+) as a cofactor.

It is found in the cytoplasm. The catalysed reaction is IMP + diphosphate = hypoxanthine + 5-phospho-alpha-D-ribose 1-diphosphate. It catalyses the reaction GMP + diphosphate = guanine + 5-phospho-alpha-D-ribose 1-diphosphate. It participates in purine metabolism; IMP biosynthesis via salvage pathway; IMP from hypoxanthine: step 1/1. It functions in the pathway purine metabolism; GMP biosynthesis via salvage pathway; GMP from guanine: step 1/1. Its function is as follows. Purine salvage pathway enzyme that catalyzes the transfer of the ribosyl-5-phosphate group from 5-phospho-alpha-D-ribose 1-diphosphate (PRPP) to the N9 position of the 6-oxopurines hypoxanthine and guanine to form the corresponding ribonucleotides IMP (inosine 5'-monophosphate) and GMP (guanosine 5'-monophosphate), with the release of PPi. The chain is Hypoxanthine-guanine phosphoribosyltransferase (hprT) from Bacillus subtilis (strain 168).